Reading from the N-terminus, the 315-residue chain is Ninja-family protein 1 (315 aa).

3 disordered regions span residues 1–28, 68–142, and 156–237; these read MASRDFLGRFGGEKGAASDKAGGGAGEA, SLPG…AQEP, and DQGN…TGDL. Residues 99 to 108 show a composition bias toward basic and acidic residues; the sequence is ERWRRREMQS. A compositionally biased stretch (polar residues) spans 156 to 166; that stretch reads DQGNPSSSMPE. 2 stretches are compositionally biased toward low complexity: residues 184–197 and 221–234; these read SSDNNNNASNQNKS and LRTLRSLTMRTTST.

Belongs to the Ninja family.

It is found in the nucleus. The sequence is that of Ninja-family protein 1 (AFP-A1) from Triticum aestivum (Wheat).